The primary structure comprises 243 residues: Sec-independent protein translocase protein TatC (243 aa).

A run of 7 helical transmembrane segments spans residues 18–38 (VIIISVIAIVIGSIIAYNYVD), 70–90 (IAIILGIILASPIILWQIWSF), 106–126 (MIPVIIILFVAGIVFAFFTVF), 132–152 (FLLQFGGDIMSPMITIGKYIS), 153–173 (FALNFLIPFGLVFELPVVVYI), 191–211 (YALLVVFILAAALTPGPDVIS), and 213–233 (LLMAAPLLILYEVSIFIAKFI).

This sequence belongs to the TatC family. In terms of assembly, forms a complex with TatA.

Its subcellular location is the cell membrane. Functionally, part of the twin-arginine translocation (Tat) system that transports large folded proteins containing a characteristic twin-arginine motif in their signal peptide across membranes. The sequence is that of Sec-independent protein translocase protein TatC from Carboxydothermus hydrogenoformans (strain ATCC BAA-161 / DSM 6008 / Z-2901).